The primary structure comprises 207 residues: HTH-type transcriptional regulator AqdR (207 aa).

Residues 16-76 (ARFRERVLDA…DALLTRTQAE (61 aa)) form the HTH tetR-type domain. Positions 39 to 58 (GFADVARKAGVNGVSLYRRW) form a DNA-binding region, H-T-H motif.

In terms of biological role, may regulate the expression of genes involved in the degradation of the Pseudomonas aeruginosa quorum sensing signal molecules HHQ (2-heptyl-4-quinolone) and PQS (2-heptyl-3-hydroxy-4-quinolone). The chain is HTH-type transcriptional regulator AqdR from Rhodococcus erythropolis (Arthrobacter picolinophilus).